We begin with the raw amino-acid sequence, 483 residues long: Protein hedgehog (483 aa).

The first 19 residues, 1–19 (MDNQTVAAIWSCASATCLS), serve as a signal peptide directing secretion. The propeptide occupies 20 to 92 (LDAKRHSVET…LALNFRHAHS (73 aa)). The disordered stretch occupies residues 28-57 (ETNTNDRQAPPGLSNSNNNNNNNKSTAVDA). Over residues 41-50 (SNSNNNNNNN) the composition is skewed to low complexity. A lipid anchor (N-palmitoyl cysteine) is attached at Cys-93. Ca(2+)-binding residues include Glu-157, Glu-158, Asp-163, Thr-193, Glu-194, Asp-197, and Asp-199. The Cholesterol glycine ester moiety is linked to residue Gly-266.

Belongs to the hedgehog family. As to quaternary structure, interacts with shf. In terms of processing, the C-terminal part of the hedgehog protein precursor displays an autoproteolysis activity that results in the cleavage of the full-length protein into two parts (N-product and C-product). In addition, the C-terminal part displays a cholesterol transferase activity that results by the covalent attachment of a cholesterol moiety to the C-terminal of the newly generated N-product. The N-product is the active species in both local and long-range signaling, whereas the C-product has no signaling activity. Post-translationally, cholesterylation is required for N-product targeting to lipid rafts and multimerization. N-palmitoylation by Rasp of the hedgehog N-product, within the secretory pathway, is required for the embryonic and larval patterning activities of the hedgehog signal.

Its subcellular location is the nucleus. The protein resides in the cytoplasm. It is found in the cell membrane. The enzyme catalyses glycyl-L-cysteinyl-[protein] + cholesterol + H(+) = [protein]-C-terminal glycyl cholesterol ester + N-terminal L-cysteinyl-[protein]. In terms of biological role, the C-terminal part of the hedgehog protein precursor displays an autoproteolysis activity that results in the cleavage of the full-length protein into two parts (N-product and C-product). In addition, the C-terminal part displays a cholesterol transferase activity that results by the covalent attachment of a cholesterol moiety to the C-terminal of the newly generated N-product. Once cleaved, the C-product has no signaling activity and diffuses from the cell. Functionally, the dually lipidated hedgehog protein N-product is a morphogen which is essential for a variety of patterning events during development. Establishes the anterior-posterior axis of the embryonic segments and patterns the larval imaginal disks. Binds to the patched (ptc) receptor, which functions in association with smoothened (smo), to activate the transcription of target genes wingless (wg), decapentaplegic (dpp) and ptc. In the absence of hh, ptc represses the constitutive signaling activity of smo through fused (fu). Essential component of a signaling pathway which regulates the Duox-dependent gut immune response to bacterial uracil; required to activate Cad99C-dependent endosome formation, norpA-dependent Ca2+ mobilization and p38 MAPK, which are essential steps in the Duox-dependent production of reactive oxygen species (ROS) in response to intestinal bacterial infection. During photoreceptor differentiation, it up-regulates transcription of Ubr3, which in turn promotes the hh-signaling pathway by mediating the ubiquitination and degradation of cos. In Drosophila virilis (Fruit fly), this protein is Protein hedgehog.